The sequence spans 547 residues: Inositol 1,4,5-trisphosphate receptor-interacting protein-like 1 (547 aa).

Positions 1 to 22 (MAVISLMFLAVMYVVHHPLMVS) are cleaved as a signal peptide. Residues 23–96 (DRMDLDTLAR…PFQAGGQDGG (74 aa)) lie on the Extracellular side of the membrane. Residues 28 to 66 (DTLARSRQLEKRMSEEMRQLEMEFEERSRAAEQKQKVEN) are a coiled coil. A helical transmembrane segment spans residues 97–117 (PLGWILGNLWNAGLFCLFLIF). Topologically, residues 118-547 (ELLRQSMQHE…LPCSPVAGGL (430 aa)) are cytoplasmic.

Belongs to the ITPRIP family.

It is found in the cell membrane. Its function is as follows. Functions as a ligand of CD3E, inhibiting TCR-CD3 complex signaling to regulate T cell activation. Induces stable CD3E-NCK1 binding, thereby preventing the CD3E-ZAP70 interaction and subsequently inhibiting the activation of the downstream ERK-NFkB signaling cascade and calcium influx. The polypeptide is Inositol 1,4,5-trisphosphate receptor-interacting protein-like 1 (Itpripl1) (Mus musculus (Mouse)).